We begin with the raw amino-acid sequence, 769 residues long: Multiple C2 domain and transmembrane region protein 5 (769 aa).

C2 domains follow at residues 23–143, 184–305, and 345–467; these read SVTG…PQWY, PEGV…SRWF, and YSSD…THSY. Residues Asp-56, Asp-62, Asp-109, Asp-111, and Asp-116 each contribute to the Ca(2+) site. The next 2 membrane-spanning stretches (helical) occupy residues 604-624 and 712-732; these read IILV…LFLI and LFVL…FQVV.

The protein belongs to the MCTP family. Ca(2+) is required as a cofactor. In terms of tissue distribution, highly expressed in roots meristems and shoot apical meristems (SAMs). Observed in flowers.

The protein localises to the endoplasmic reticulum membrane. May function as a signaling molecule by regulating the trafficking of other regulators. In Arabidopsis thaliana (Mouse-ear cress), this protein is Multiple C2 domain and transmembrane region protein 5.